We begin with the raw amino-acid sequence, 507 residues long: Histidine ammonia-lyase (507 aa).

A cross-link (5-imidazolinone (Ala-Gly)) is located at residues 140–142 (ASG). Serine 141 is modified (2,3-didehydroalanine (Ser)).

This sequence belongs to the PAL/histidase family. In terms of processing, contains an active site 4-methylidene-imidazol-5-one (MIO), which is formed autocatalytically by cyclization and dehydration of residues Ala-Ser-Gly.

The protein localises to the cytoplasm. It carries out the reaction L-histidine = trans-urocanate + NH4(+). It participates in amino-acid degradation; L-histidine degradation into L-glutamate; N-formimidoyl-L-glutamate from L-histidine: step 1/3. This Yersinia enterocolitica serotype O:8 / biotype 1B (strain NCTC 13174 / 8081) protein is Histidine ammonia-lyase.